The primary structure comprises 345 residues: MKTLQELTRPNIWRLKPYSSARDEYSGAAASVFLDANENPYNLPHNRYPDPMQRDLKLELSKIKKVAPAHIFLGNGSDEAIDLVFRAFCEPGRDNVVAIDPTYGMYQVCADVNDVEYRKVLLHDDFQFSADELLAVADERTKMIFLCSPNNPTGNDLLRSEIIKVINDFEGLVILDEAYNDFSDEPSFLSELDKYPNLIILQTFSKAFGCAAIRLGMAFASEGIIGVLNKIKYPYNVNQLTQQQAIEMLHKYYEIERWVKTLKEERGYLEEAFVELPWVLQVFPSNANFFLARVTDAVKIYNYLVGEGIIVRNRNSISLCGNCLRVTVGTRAENAKLIGALKKYQ.

The residue at position 206 (K206) is an N6-(pyridoxal phosphate)lysine.

The protein belongs to the class-II pyridoxal-phosphate-dependent aminotransferase family. Histidinol-phosphate aminotransferase subfamily. As to quaternary structure, homodimer. It depends on pyridoxal 5'-phosphate as a cofactor.

The enzyme catalyses L-histidinol phosphate + 2-oxoglutarate = 3-(imidazol-4-yl)-2-oxopropyl phosphate + L-glutamate. Its pathway is amino-acid biosynthesis; L-histidine biosynthesis; L-histidine from 5-phospho-alpha-D-ribose 1-diphosphate: step 7/9. The polypeptide is Histidinol-phosphate aminotransferase (Bacteroides fragilis (strain YCH46)).